The sequence spans 178 residues: Caveolin-1 (178 aa).

An N-acetylserine modification is found at Ser2. The residue at position 2 (Ser2) is a Phosphoserine. Positions 2 to 94 (SGGKYVDSEG…WKASFTTFTV (93 aa)) are required for homooligomerization. The Cytoplasmic segment spans residues 2 to 104 (SGGKYVDSEG…TKYWFYRLLS (103 aa)). Lys5 is subject to N6-acetyllysine; alternate. Lys5 is covalently cross-linked (Glycyl lysine isopeptide (Lys-Gly) (interchain with G-Cter in ubiquitin); alternate). Residue Tyr6 is modified to Phosphotyrosine. The residue at position 9 (Ser9) is a Phosphoserine. Residue Tyr14 is modified to Phosphotyrosine; by ABL1. Tyr25 is subject to Phosphotyrosine. Glycyl lysine isopeptide (Lys-Gly) (interchain with G-Cter in ubiquitin) cross-links involve residues Lys26, Lys30, Lys39, Lys47, and Lys57. Residues 82–94 (DGIWKASFTTFTV) form an interaction with CAVIN3 region. Positions 105–125 (SLVGIPVALIWGIYFAILSFL) form an intramembrane region, helical. Over 126–178 (YIWAVVPCIKSFLIKIQCISRIYSICIHTFCDPLYEAIGKIFSNIRISMQKEI) the chain is Cytoplasmic. An interacts with SPRY1, SPRY2, SPRY3 and SPRY4 region spans residues 131-142 (VPCIKSFLIKIQ). 3 S-palmitoyl cysteine lipidation sites follow: Cys133, Cys143, and Cys156. Positions 149 to 160 (SICIHTFCDPLY) are interacts with SPRY1, SPRY2, and SPRY4. An interacts with SPRY1, SPRY2, SPRY3 and SPRY4 region spans residues 167–178 (FSNIRISMQKEI).

This sequence belongs to the caveolin family. Homooligomer. Interacts with GLIPR2. Interacts with NOSTRIN. Interacts with SNAP25 and STX1A. Interacts (via the N-terminus) with DPP4; the interaction is direct. Interacts with CTNNB1, CDH1 and JUP. Interacts with PACSIN2; this interaction induces membrane tubulation. Interacts with SLC7A9. Interacts with BMX and BTK. Interacts with TGFBR1. Interacts with CAVIN3 (via leucine-zipper domain) in a cholesterol-sensitive manner. Interacts with CAVIN1. Interacts with EHD2 in a cholesterol-dependent manner. Forms a ternary complex with UBXN6 and VCP; mediates CAV1 targeting to lysosomes for degradation. Interacts with ABCG1; this interaction regulates ABCG1-mediated cholesterol efflux. Interacts with NEU3; this interaction enhances NEU3 sialidase activity within caveola. Interacts (via C-terminus) with SPRY1, SPRY2 (via C-terminus), SPRY3, and SPRY4. Interacts with IGFBP5; this interaction allows trafficking of IGFBP5 from the plasma membrane to the nucleus. Post-translationally, phosphorylated at Tyr-14 by ABL1 in response to oxidative stress. In terms of processing, ubiquitinated. Undergo monoubiquitination and multi- and/or polyubiquitination. Monoubiquitination of N-terminal lysines promotes integration in a ternary complex with UBXN6 and VCP which promotes oligomeric CAV1 targeting to lysosomes for degradation. Ubiquitinated by ZNRF1; leading to degradation and modulation of the TLR4-mediated immune response.

Its subcellular location is the golgi apparatus membrane. The protein localises to the cell membrane. It is found in the membrane. The protein resides in the caveola. It localises to the membrane raft. In terms of biological role, may act as a scaffolding protein within caveolar membranes. Forms a stable heterooligomeric complex with CAV2 that targets to lipid rafts and drives caveolae formation. Mediates the recruitment of CAVIN proteins (CAVIN1/2/3/4) to the caveolae. Interacts directly with G-protein alpha subunits and can functionally regulate their activity. Involved in the costimulatory signal essential for T-cell receptor (TCR)-mediated T-cell activation. Its binding to DPP4 induces T-cell proliferation and NF-kappa-B activation in a T-cell receptor/CD3-dependent manner. Recruits CTNNB1 to caveolar membranes and may regulate CTNNB1-mediated signaling through the Wnt pathway. Negatively regulates TGFB1-mediated activation of SMAD2/3 by mediating the internalization of TGFBR1 from membrane rafts leading to its subsequent degradation. Binds 20(S)-hydroxycholesterol (20(S)-OHC). In Atelerix albiventris (Middle-African hedgehog), this protein is Caveolin-1 (CAV1).